A 329-amino-acid chain; its full sequence is Ribosomal RNA small subunit methyltransferase C (329 aa).

The protein belongs to the methyltransferase superfamily. RsmC family. As to quaternary structure, monomer.

It is found in the cytoplasm. The enzyme catalyses guanosine(1207) in 16S rRNA + S-adenosyl-L-methionine = N(2)-methylguanosine(1207) in 16S rRNA + S-adenosyl-L-homocysteine + H(+). Specifically methylates the guanine in position 1207 of 16S rRNA in the 30S particle. This is Ribosomal RNA small subunit methyltransferase C from Haemophilus ducreyi (strain 35000HP / ATCC 700724).